We begin with the raw amino-acid sequence, 118 residues long: MIWSKLSSSINYYINKRIWGEELLKENILLLNQYIEDAFILEDGIYKYLDKKTYEYIDLSEEDMKKIEEAFIERLEKKRKVNKDKENFKNHMIMITEYLENEKSKEKSNVIELKNYRK.

This is an uncharacterized protein from Clostridium perfringens.